The chain runs to 235 residues: Phosphoribosylaminoimidazole-succinocarboxamide synthase (235 aa).

This sequence belongs to the SAICAR synthetase family.

The catalysed reaction is 5-amino-1-(5-phospho-D-ribosyl)imidazole-4-carboxylate + L-aspartate + ATP = (2S)-2-[5-amino-1-(5-phospho-beta-D-ribosyl)imidazole-4-carboxamido]succinate + ADP + phosphate + 2 H(+). Its pathway is purine metabolism; IMP biosynthesis via de novo pathway; 5-amino-1-(5-phospho-D-ribosyl)imidazole-4-carboxamide from 5-amino-1-(5-phospho-D-ribosyl)imidazole-4-carboxylate: step 1/2. The protein is Phosphoribosylaminoimidazole-succinocarboxamide synthase of Clostridium perfringens (strain SM101 / Type A).